Here is an 84-residue protein sequence, read N- to C-terminus: UPF0297 protein Csac_1773 (84 aa).

The protein belongs to the UPF0297 family.

This Caldicellulosiruptor saccharolyticus (strain ATCC 43494 / DSM 8903 / Tp8T 6331) protein is UPF0297 protein Csac_1773.